The following is a 307-amino-acid chain: Plastid division protein PDV2 (307 aa).

M1 bears the N-acetylmethionine mark. Over 1–213 (MEDEEGIGLI…SGGSSHGVIR (213 aa)) the chain is Cytoplasmic. A disordered region spans residues 28 to 66 (SSTTVSDNGDGNEDLSPGEGRKSEIIGNQDKDFDSISSE). A compositionally biased stretch (basic and acidic residues) spans 46–61 (EGRKSEIIGNQDKDFD). A Phosphoserine modification is found at S50. Positions 76–103 (LLRIRDALEALESQLASLQNLRQRQQYE) form a coiled coil. The disordered stretch occupies residues 174–206 (HLPSKKKSDANGFGSGHVRNEAEAKSPNGGSGG). A helical transmembrane segment spans residues 214 to 234 (FLGSVAKIVLPIIGVISLLSA). At 235–307 (SGYGPEMRKR…AKRDVTYGYG (73 aa)) the chain is on the chloroplast intermembrane side. The interval 235-307 (SGYGPEMRKR…AKRDVTYGYG (73 aa)) is ARC6 binding.

In terms of assembly, interacts (via C-terminus) with ARC6 (via C-terminus) in the chloroplast intermembrane space; this interaction induces ARC6 homodimerization and leads to the formation of a heterotetramer containing two ARC6 and two PDV2 subunits. Interacts with ARC5/DRP5B. In terms of tissue distribution, mostly expressed in young leaves.

The protein resides in the plastid. Its subcellular location is the chloroplast outer membrane. Its function is as follows. Component of the plastid division machinery consisting in a binary fission accomplished by the simultaneous constriction of the FtsZ ring on the stromal side of the inner envelope membrane, and the ARC5/DRP5B ring on the cytosolic side of the outer envelope membrane. Positive factor of chloroplast division required, with a dosage effect, to mediate the recruitment and dimerization of ARC5/DRP5B at the midplastid constriction site in the cytoplasm at plastid outer envelope membranes (OEMs). Prevents ARC5/DRP5B GTPase acrivity. Relays plastid division site position between stroma and outer surface via interactions with the cytoplasmic ARC5/DRP5B and the inner membrane ARC6 that recruits stromal FtsZ ring. Binding to phosphatidylinositol 4-phosphate (PI4P) modulates negatively chloroplast division. The polypeptide is Plastid division protein PDV2 (Arabidopsis thaliana (Mouse-ear cress)).